We begin with the raw amino-acid sequence, 64 residues long: DNA gyrase inhibitor YacG (64 aa).

Residues Cys-7, Cys-10, Cys-26, and Cys-30 each contribute to the Zn(2+) site. The disordered stretch occupies residues 43 to 64 (KRIPGPINPDLLPYPDEGEQWQ).

Belongs to the DNA gyrase inhibitor YacG family. As to quaternary structure, interacts with GyrB. Zn(2+) is required as a cofactor.

In terms of biological role, inhibits all the catalytic activities of DNA gyrase by preventing its interaction with DNA. Acts by binding directly to the C-terminal domain of GyrB, which probably disrupts DNA binding by the gyrase. The polypeptide is DNA gyrase inhibitor YacG (Aeromonas salmonicida (strain A449)).